The chain runs to 297 residues: Tumor necrosis factor receptor superfamily member 27 (297 aa).

At 1–138 (MDCQENEYRD…AHTVPPREAT (138 aa)) the chain is on the extracellular side. 3 TNFR-Cys repeats span residues 2–41 (DCQENEYRDQWGRCVTCQQCGPGQELSKDCGYGEGGDAHC), 43–83 (VCPP…NAIC), and 85–118 (DCLPRFYRKTRIGGLQDQECIPCTKQTPSSEVQC). Cystine bridges form between C3-C15, C18-C31, C21-C41, C44-C58, C61-C75, C64-C83, C86-C104, and C107-C118. 2 N-linked (GlcNAc...) asparagine glycosylation sites follow: N74 and N77. The helical; Signal-anchor for type III membrane protein transmembrane segment at 139–159 (LVALVGSLLVVFALAFLGLFF) threads the bilayer. Topologically, residues 160-297 (LYCKQIFNRH…LYVPFEVPSL (138 aa)) are cytoplasmic.

As to quaternary structure, associates with TRAF1, TRAF3 and TRAF6.

The protein localises to the membrane. In terms of biological role, receptor for EDA isoform A2, but not for EDA isoform A1. Mediates the activation of the NF-kappa-B and JNK pathways. Activation seems to be mediated by binding to TRAF3 and TRAF6. The protein is Tumor necrosis factor receptor superfamily member 27 (Eda2r) of Mus musculus (Mouse).